We begin with the raw amino-acid sequence, 100 residues long: RING finger protein Z (100 aa).

G2 carries N-myristoyl glycine; by host lipidation. Residues 43 to 79 (CRCCWFANTNLIKCSDHYICLKCLNIMLGKSSFCDIC) form an RING-type; atypical zinc finger. Positions 93–96 (PSAP) match the PTAP/PSAP motif motif.

The protein belongs to the arenaviridae Z protein family. Interacts with protein NP; this interaction probably directs the encapsidated genome to budding sites. Interacts (via RING domain) with polymerase L; this interaction inhibits viral transcription and replication, Z partially blocks the product exit tunnel for the releasing nascent RNA product. Interacts with the glycoprotein complex; this interaction plays a role in virion budding. Interacts with host eIF4E; this interaction results in eIF4E reduced affinity for its substrate, the 5'-m7 G cap structure. Interacts (via late-budding domain) with host TSG101; this interaction is essential for budding and release of viral particles. Interacts with host RPLP0; this interaction may serve to load ribosome-like particles inside the virion. Interacts with host PML; this interaction induces PML bodies redistribution in the cytoplasm upon viral infection. In terms of processing, myristoylation is required for the role of RING finger protein Z in assembly and budding.

It is found in the virion. The protein localises to the host cytoplasm. It localises to the host perinuclear region. Its subcellular location is the host cell membrane. Plays a crucial role in virion assembly and budding. Expressed late in the virus life cycle, it acts as an inhibitor of viral transcription and RNA synthesis by interacting with the viral polymerase L. Presumably recruits the NP encapsidated genome to cellular membranes at budding sites via direct interaction with NP. Plays critical roles in the final steps of viral release by interacting with host TSG101, a member of the vacuolar protein-sorting pathway and using other cellular host proteins involved in vesicle formation pathway. The budding of the virus progeny occurs after association of protein Z with the viral glycoprotein complex SSP-GP1-GP2 at the cell periphery, step that requires myristoylation of protein Z. Also selectively represses protein production by associating with host eIF4E. In cell-based minigenome assay, has an inhibitory effect on the ribonucleoprotein machinery (vRNP), which is responsible for the replication and transcription of the viral genome. The sequence is that of RING finger protein Z from Homo sapiens (Human).